Consider the following 755-residue polypeptide: MASVHESLYFNPMMTNGVVHANVFGIKDWVTPYKIAVLVLLNEMSRTGEGAVSLMERRRLNQLLLPLLQGPDITLSKLYKLIEESCPQLANSVQIRIKLMAEGELKDMEQFFDDLSDSFSGTEPEVHKTSVVGLFLRHMILAYSKLSFSQVFKLYTALQQYFQNGEKKTVEDADMELTSRDEGERKMEKEELDVSVREEEVSCSGPLSQKQAEFFLSQQASLLKNDETKALTPASLQKELNNLLKFNPDFAEAHYLSYLNNLRVQDVFSSTHSLLHYFDRLILTGAESKSNGEEGYGRSLRYAALNLAALHCRFGHYQQAELALQEAIRIAQESNDHVCLQHCLSWLYVLGQKRSDSYVLLEHSVKKAVHFGLPYLASLGIQSLVQQRAFAGKTANKLMDALKDSDLLHWKHSLSELIDISIAQKTAIWRLYGRSTMALQQAQMLLSMNSLEAVNAGVQQNNTESFAVALCHLAELHAEQGCFAAASEVLKHLKERFPPNSQHAQLWMLCDQKIQFDRAMNDGKYHLADSLVTGITALNSIEGVYRKAVVLQAQNQMSEAHKLLQKLLVHCQKLKNTEMVISVLLSVAELYWRSSSPTIALPMLLQALALSKEYRLQYLASETVLNLAFAQLILGIPEQALSLLHMAIEPILADGAILDKGRAMFLVAKCQVASAASYDQPKKAEALEAAIENLNEAKNYFAKVDCKERIRDVVYFQARLYHTLGKTQERNRCAMLFRQLHQELPSHGVPLINHL.

Ser-195 is modified (phosphoserine). 13 TPR repeats span residues 209–249, 250–300, 301–337, 338–378, 379–418, 419–466, 467–500, 501–540, 541–580, 581–620, 621–660, 661–696, and 697–736; these read QKQA…FNPD, FAEA…GRSL, RYAA…SNDH, VCLQ…YLAS, LGIQ…SELI, DISI…TESF, AVAL…FPPN, SQHA…ALNS, IEGV…TEMV, ISVL…QYLA, SETV…ILDK, GRAM…NLNE, and AKNY…CAML. Phosphothreonine is present on Thr-232.

The protein belongs to the APC5 family. As to quaternary structure, the mammalian APC/C is composed at least of 14 distinct subunits ANAPC1, ANAPC2, CDC27/APC3, ANAPC4, ANAPC5, CDC16/APC6, ANAPC7, CDC23/APC8, ANAPC10, ANAPC11, CDC26/APC12, ANAPC13, ANAPC15 and ANAPC16 that assemble into a complex of at least 19 chains with a combined molecular mass of around 1.2 MDa; APC/C interacts with FZR1 and FBXO5.

The protein localises to the nucleus. It is found in the cytoplasm. The protein resides in the cytoskeleton. It localises to the spindle. It participates in protein modification; protein ubiquitination. Component of the anaphase promoting complex/cyclosome (APC/C), a cell cycle-regulated E3 ubiquitin ligase that controls progression through mitosis and the G1 phase of the cell cycle. The APC/C complex acts by mediating ubiquitination and subsequent degradation of target proteins: it mainly mediates the formation of 'Lys-11'-linked polyubiquitin chains and, to a lower extent, the formation of 'Lys-48'- and 'Lys-63'-linked polyubiquitin chains. The APC/C complex catalyzes assembly of branched 'Lys-11'-/'Lys-48'-linked branched ubiquitin chains on target proteins. In Homo sapiens (Human), this protein is Anaphase-promoting complex subunit 5 (ANAPC5).